A 415-amino-acid chain; its full sequence is Serine hydroxymethyltransferase (415 aa).

Residues Leu-117 and 121–123 contribute to the (6S)-5,6,7,8-tetrahydrofolate site; that span reads GHL. Residue Lys-226 is modified to N6-(pyridoxal phosphate)lysine. (6S)-5,6,7,8-tetrahydrofolate is bound at residue Glu-241.

Belongs to the SHMT family. As to quaternary structure, homodimer. Pyridoxal 5'-phosphate is required as a cofactor.

Its subcellular location is the cytoplasm. It carries out the reaction (6R)-5,10-methylene-5,6,7,8-tetrahydrofolate + glycine + H2O = (6S)-5,6,7,8-tetrahydrofolate + L-serine. The protein operates within one-carbon metabolism; tetrahydrofolate interconversion. It functions in the pathway amino-acid biosynthesis; glycine biosynthesis; glycine from L-serine: step 1/1. Its function is as follows. Catalyzes the reversible interconversion of serine and glycine with tetrahydrofolate (THF) serving as the one-carbon carrier. This reaction serves as the major source of one-carbon groups required for the biosynthesis of purines, thymidylate, methionine, and other important biomolecules. Also exhibits THF-independent aldolase activity toward beta-hydroxyamino acids, producing glycine and aldehydes, via a retro-aldol mechanism. The chain is Serine hydroxymethyltransferase from Bacillus velezensis (strain DSM 23117 / BGSC 10A6 / LMG 26770 / FZB42) (Bacillus amyloliquefaciens subsp. plantarum).